The sequence spans 68 residues: Large ribosomal subunit protein uL29c (68 aa).

This sequence belongs to the universal ribosomal protein uL29 family.

The protein resides in the plastid. The protein localises to the chloroplast. The protein is Large ribosomal subunit protein uL29c of Pyropia yezoensis (Susabi-nori).